The primary structure comprises 1826 residues: Kinesin-like protein KIF13B (1826 aa).

The region spanning 5–353 (KVKVAVRIRP…LRYADRAKHI (349 aa)) is the Kinesin motor domain. 103 to 110 (GQTGSGKS) contributes to the ATP binding site. Residues 364–439 (NARIIRDLRE…ESLGISLQSS (76 aa)) are a coiled coil. Positions 471-535 (TLIGSANSQD…LHHGDRILWG (65 aa)) constitute an FHA domain. The tract at residues 546–582 (KKKKKAEREDEDQDPSMKNENSSEQLDVDGDSSSEVS) is disordered. Positions 561–570 (SMKNENSSEQ) are enriched in polar residues. Coiled-coil stretches lie at residues 607-710 (MQSI…LDKR), 752-772 (SLEKLDNRLLDMRDLYQEWKE), and 1096-1143 (LNAL…ERNA). Position 661 is a phosphoserine (S661). A disordered region spans residues 1367 to 1420 (EQLTGKGKLSRRSISSPNVNRLSGSRQDLIPSYSLGSNKGRWESQQDVSQTTVS). Composition is skewed to polar residues over residues 1378–1392 (RSISSPNVNRLSGSR) and 1409–1420 (ESQQDVSQTTVS). A Phosphoserine modification is found at S1379. Phosphoserine; by MARK2 is present on S1381. S1382 and S1391 each carry phosphoserine. S1410 carries the post-translational modification Phosphoserine; by MARK2. Phosphoserine occurs at positions 1432, 1438, and 1537. T1545 carries the post-translational modification Phosphothreonine. S1559 is modified (phosphoserine). A compositionally biased stretch (low complexity) spans 1579–1607 (SDALGPGLDAAAPPGSMPTAPEAEPEAPI). Disordered stretches follow at residues 1579–1650 (SDAL…RVRR) and 1662–1698 (MLAGDPGCSPGAEGNAPAPGAGGQALASDSEEADEVP). The span at 1608 to 1624 (SHPPPPTAVPAEEPPGP) shows a compositional bias: pro residues. The residue at position 1644 (S1644) is a Phosphoserine. Residues 1671-1688 (PGAEGNAPAPGAGGQALA) show a composition bias toward low complexity. One can recognise a CAP-Gly domain in the interval 1721–1763 (GPADFQEGTWVGVELDLPSGKNDGSIGGKQYFRCNPGYGLLVR). Residue S1797 is modified to Phosphoserine.

Belongs to the TRAFAC class myosin-kinesin ATPase superfamily. Kinesin family. As to quaternary structure, binds to DLG1 and DLG4. Interacts (when phosphorylated at Ser-1381 and Ser-1410) with 14-3-3. Phosphorylated at Ser-1381 and Ser-1410 by MARK2, promoting interaction with 14-3-3 and inhibiting microtubule-dependent accumulation and formation of axons. As to expression, ubiquitous.

The protein resides in the cytoplasm. It localises to the cytoskeleton. Its subcellular location is the cell projection. The protein localises to the axon. In terms of biological role, involved in reorganization of the cortical cytoskeleton. Regulates axon formation by promoting the formation of extra axons. May be functionally important for the intracellular trafficking of MAGUKs and associated protein complexes. The chain is Kinesin-like protein KIF13B (KIF13B) from Homo sapiens (Human).